The primary structure comprises 139 residues: Nucleoside diphosphate kinase (139 aa).

ATP-binding residues include Lys11, Phe59, Arg87, Thr93, Arg104, and Asn114. The active-site Pros-phosphohistidine intermediate is His117.

The protein belongs to the NDK family. In terms of assembly, homotetramer. Mg(2+) is required as a cofactor.

Its subcellular location is the cytoplasm. The catalysed reaction is a 2'-deoxyribonucleoside 5'-diphosphate + ATP = a 2'-deoxyribonucleoside 5'-triphosphate + ADP. It carries out the reaction a ribonucleoside 5'-diphosphate + ATP = a ribonucleoside 5'-triphosphate + ADP. Major role in the synthesis of nucleoside triphosphates other than ATP. The ATP gamma phosphate is transferred to the NDP beta phosphate via a ping-pong mechanism, using a phosphorylated active-site intermediate. The polypeptide is Nucleoside diphosphate kinase (Moorella thermoacetica (strain ATCC 39073 / JCM 9320)).